Here is a 156-residue protein sequence, read N- to C-terminus: Protein BUNDLE SHEATH DEFECTIVE 2, chloroplastic (156 aa).

Residues 1 to 41 constitute a chloroplast transit peptide; the sequence is MNSAALNARTASVAPQPQACHACKCRQLLSRRVPPAQRQVE. Residues Cys78, Cys81, Cys89, Cys92, Cys133, Cys136, Cys144, and Cys147 each coordinate Zn(2+).

The protein belongs to the BSD2 chaperone family. As to quaternary structure, interacts with the RuBisCo large subunit (RbcL) assembled as an intermediate complex made of eight RbcL and eight BSD2 subunits.

Its subcellular location is the plastid. It localises to the chloroplast stroma. Chloroplast chaperone required for RuBisCo biogenesis and translational regulation of the RuBisCo large subunit (RbcL). Stabilizes an end-state assembly intermediate of eight RbcL subunits until the small subunits (RBCSs) become available to produce a complete stable RuBisCo complex containing eight small and eight large subunits. This chain is Protein BUNDLE SHEATH DEFECTIVE 2, chloroplastic, found in Chlamydomonas reinhardtii (Chlamydomonas smithii).